A 622-amino-acid polypeptide reads, in one-letter code: Probable ATP-dependent RNA helicase DDX41 (622 aa).

Over residues 1–15 (MEESEPERKRARTDE) the composition is skewed to basic and acidic residues. Disordered regions lie at residues 1–39 (MEES…YVPL) and 52–84 (QRRR…PQSN). At serine 4 the chain carries Phosphoserine. N6-acetyllysine is present on lysine 9. A Glycyl lysine isopeptide (Lys-Gly) (interchain with G-Cter in ubiquitin) cross-link involves residue lysine 9. Phosphoserine occurs at positions 21 and 23. Residue tyrosine 33 is modified to Phosphotyrosine. Residue lysine 115 forms a Glycyl lysine isopeptide (Lys-Gly) (interchain with G-Cter in ubiquitin) linkage. The Q motif signature appears at 181–209 (KSFKEMKFPAAILRGLKKKGIHHPTPIQI). One can recognise a Helicase ATP-binding domain in the interval 212–396 (IPTILSGRDM…KSALVKPVTI (185 aa)). 225-232 (AFTGSGKT) provides a ligand contact to ATP. The DEAD box signature appears at 344 to 347 (DEAD). A Helicase C-terminal domain is found at 407–567 (DVIQEVEYVK…KVPPVLQVLH (161 aa)). Phosphotyrosine; by BTK is present on tyrosine 414. Residues lysine 416 and lysine 442 each participate in a glycyl lysine isopeptide (Lys-Gly) (interchain with G-Cter in SUMO2) cross-link. Residues 580–597 (RGCAFCGGLGHRITDCPK) form a CCHC-type zinc finger.

Belongs to the DEAD box helicase family. DDX41 subfamily. In terms of assembly, identified in the spliceosome C complex. Interacts with ERCC6. Interacts with FAM50A. Interacts with STING1. Interacts with CGAS. Interacts with several spliceosomes components such as PRP19 or CDC5L. Acetylation at Lys-9 regulates the nuclear/cytoplasmic localization. Post-translationally, phosphorylated by BTK; phosphorylation induces binding to dsDNA and STING1. In terms of processing, 'Lys-48'-linked ubiquitinated and degraded by TRIM21 leading to negative regulation of the innate immune response to intracellular dsDNA.

Its subcellular location is the nucleus. The protein localises to the cytoplasm. It carries out the reaction ATP + H2O = ADP + phosphate + H(+). Multifunctional protein that participates in many aspects of cellular RNA metabolism. Plays pivotal roles in innate immune sensing and hematopoietic homeostasis. Recognizes foreign or self-nucleic acids generated during microbial infection, thereby initiating anti-pathogen responses. Mechanistically, phosphorylation by BTK allows binding to dsDNA leading to interaction with STING1. Modulates the homeostasis of dsDNA through its ATP-dependent DNA-unwinding activity and ATP-independent strand-annealing activity. In turn, induces STING1-mediated type I interferon and cytokine responses to DNA and DNA viruses. Selectively modulates the transcription of certain immunity-associated genes by regulating their alternative splicing. Binds to RNA (R)-loops, structures consisting of DNA/RNA hybrids and a displaced strand of DNA that occur during transcription, and prevents their accumulation, thereby maintaining genome stability. Also participates in pre-mRNA splicing, translational regulation and snoRNA processing, which is essential for ribosome biogenesis. In Homo sapiens (Human), this protein is Probable ATP-dependent RNA helicase DDX41 (DDX41).